Consider the following 716-residue polypeptide: Epidermal growth factor receptor kinase substrate 8-like protein 2 (716 aa).

Disordered regions lie at residues 1–25 and 182–243; these read MSQSGTMSCCPGATNGSLGRSDGVA and PQTL…SQEE. In terms of domain architecture, PID spans 46-202; it reads MHETSQYHVQ…RQRQSILPPP (157 aa). Residues 199–208 show a composition bias toward pro residues; sequence LPPPQGPAPI. Residues 234–243 are compositionally biased toward basic and acidic residues; sequence GFRRRESQEE. Phosphoserine is present on S240. T304 bears the Phosphothreonine mark. The tract at residues 449 to 488 is disordered; it reads VSPVSRQSIRNSQKHSPTSEPTPPGDALPPVSSPHTHRGY. Phosphoserine is present on S450. Over residues 452 to 467 the composition is skewed to polar residues; that stretch reads VSRQSIRNSQKHSPTS. Residue T470 is modified to Phosphothreonine. One can recognise an SH3 domain in the interval 493 to 552; the sequence is AMAKYVKILYDFTARNANELSVLKDEVLEVLEDGRQWWKLRSRSGQAGYVPCNILGEARP. S571 carries the phosphoserine modification.

This sequence belongs to the EPS8 family. As to quaternary structure, interacts with ABI1. Part of a complex that contains SOS1, ABI1 and EPS8L2. Associates with F-actin.

The protein resides in the cytoplasm. Its subcellular location is the cell projection. It is found in the stereocilium. Stimulates guanine exchange activity of SOS1. May play a role in membrane ruffling and remodeling of the actin cytoskeleton. In the cochlea, is required for stereocilia maintenance in adult hair cells. This Pongo abelii (Sumatran orangutan) protein is Epidermal growth factor receptor kinase substrate 8-like protein 2 (EPS8L2).